We begin with the raw amino-acid sequence, 101 residues long: Thioredoxin 1 (101 aa).

The Thioredoxin domain occupies 2–101 (AQTLDDLIRT…MRQEVLKAIG (100 aa)). Residues C25 and C28 are joined by a disulfide bond.

The protein belongs to the thioredoxin family.

Its function is as follows. Participates in various redox reactions through the reversible oxidation of its active center dithiol to a disulfide and catalyzes dithiol-disulfide exchange reactions. In Chlorobaculum tepidum (strain ATCC 49652 / DSM 12025 / NBRC 103806 / TLS) (Chlorobium tepidum), this protein is Thioredoxin 1 (trx1).